The chain runs to 159 residues: Ribosomal RNA large subunit methyltransferase H (159 aa).

S-adenosyl-L-methionine is bound by residues leucine 76, glycine 108, and 127-132 (FGRLTL).

Belongs to the RNA methyltransferase RlmH family. In terms of assembly, homodimer.

The protein localises to the cytoplasm. It carries out the reaction pseudouridine(1915) in 23S rRNA + S-adenosyl-L-methionine = N(3)-methylpseudouridine(1915) in 23S rRNA + S-adenosyl-L-homocysteine + H(+). In terms of biological role, specifically methylates the pseudouridine at position 1915 (m3Psi1915) in 23S rRNA. The sequence is that of Ribosomal RNA large subunit methyltransferase H from Streptococcus pneumoniae (strain 70585).